A 153-amino-acid polypeptide reads, in one-letter code: UPF0260 protein YcgN (153 aa).

The protein belongs to the UPF0260 family.

The polypeptide is UPF0260 protein YcgN (Salmonella dublin (strain CT_02021853)).